The primary structure comprises 91 residues: MARNVFCAYLKQEAEGLDFQLYPGELGKRIFDSISKQAWAEWIKKQTMLVNEKKLNMMNPEHRQLLETEMVNFLFEGKEVHIEGYVPVESK.

It belongs to the Fe(2+)-trafficking protein family.

In terms of biological role, could be a mediator in iron transactions between iron acquisition and iron-requiring processes, such as synthesis and/or repair of Fe-S clusters in biosynthetic enzymes. The chain is Probable Fe(2+)-trafficking protein from Glaesserella parasuis serovar 5 (strain SH0165) (Haemophilus parasuis).